We begin with the raw amino-acid sequence, 160 residues long: Cytochrome b6-f complex subunit 4 (160 aa).

Transmembrane regions (helical) follow at residues Leu36 to Val56, Leu95 to Glu115, and Ile128 to Ala148.

This sequence belongs to the cytochrome b family. PetD subfamily. As to quaternary structure, the 4 large subunits of the cytochrome b6-f complex are cytochrome b6, subunit IV (17 kDa polypeptide, PetD), cytochrome f and the Rieske protein, while the 4 small subunits are PetG, PetL, PetM and PetN. The complex functions as a dimer.

It is found in the cellular thylakoid membrane. In terms of biological role, component of the cytochrome b6-f complex, which mediates electron transfer between photosystem II (PSII) and photosystem I (PSI), cyclic electron flow around PSI, and state transitions. In Synechococcus sp. (strain CC9311), this protein is Cytochrome b6-f complex subunit 4.